A 344-amino-acid chain; its full sequence is Putative NAD(P)H nitroreductase MT3217 (344 aa).

FMN-binding positions include 40–44 and Arg326; that span reads QPWRW.

Belongs to the nitroreductase family. In terms of assembly, interacts with human TLR2. The cofactor is FMN.

Stimulates pro-inflammatory cytokine expression via TLR2 signaling pathway. Activation of TLR2 results in the phosphorylation and activation of NF-kappa-B. Also induces TLR2 expression. May influence the innate immune responses to facilitate the survival of M.tuberculosis in the granulomatous microenvironment. This Mycobacterium tuberculosis (strain CDC 1551 / Oshkosh) protein is Putative NAD(P)H nitroreductase MT3217.